A 388-amino-acid chain; its full sequence is Staphopain A (388 aa).

Positions 1–25 are cleaved as a signal peptide; sequence MKRNFPKLIALSLIFSLSVTPIANA. Positions 26–214 are excised as a propeptide; the sequence is ESNSNIKAKD…TSQFKSNNYT (189 aa). Active-site residues include cysteine 238, histidine 334, and asparagine 355.

This sequence belongs to the peptidase C47 family. In the cytoplasm, prematurely activated/folded ScpA forms a stable non-covalent complex with ScpB. In terms of processing, cleavage leads to the activation of ScpA probably by an auto-catalytic manner.

The protein localises to the secreted. The catalysed reaction is Broad endopeptidase action on proteins including elastin, but rather limited hydrolysis of small-molecule substrates. Assays are conveniently made with hemoglobin, casein or Z-Phe-Arg-NHMec as substrate.. Prematurely activated/folded staphopain A is inhibited by staphostatin A (ScpB), which is probably required to protect staphylococcal cytoplasmic proteins from degradation by ScpA. In terms of biological role, cysteine protease that plays an important role in the inhibition of host innate immune response. Cleaves host elastins found in connective tissues, pulmonary surfactant protein A in the lungs, and the chemokine receptor CXCR2 on leukocytes. Proteolytic cleavage of surfactant protein A impairs bacterial phagocytosis by neutrophils while CXCR2 degradation blocks neutrophil activation and chemotaxis. Additionally, promotes vascular leakage by activating the plasma kallikerin/kinin system, resulting in hypotension. The chain is Staphopain A (sspP) from Staphylococcus aureus (strain Mu50 / ATCC 700699).